We begin with the raw amino-acid sequence, 335 residues long: CTD kinase subunit beta (335 aa).

2 Cyclin N-terminal domains span residues isoleucine 26 to phenylalanine 151 and asparagine 158 to histidine 241. The segment at lysine 269 to glutamate 293 is disordered.

This sequence belongs to the cyclin family. As to quaternary structure, CTDK-I consists of three subunits, ctk1/lsk1, ctk2/lsc1 and ctk3 (also called alpha, beta and gamma). Interacts with ctk1/lsk1. This interaction is dependent on ctk1/lsk1 kinase activity.

It localises to the cytoplasm. The protein resides in the nucleus. Its function is as follows. Cyclin subunit of the CTDK-I complex, which hyperphosphorylates the C-terminal heptapeptide repeat domain (CTD) of the largest RNA polymerase II subunit. As part of the CTDK-I complex, involved in RNA polymerase II transcriptional elongation and pre-mRNA 3'-end processing. Together with ctk3, required for ctk1/lsk1 CTD kinase activation. Together with ctk1/lsk1, required for the regulation of cytokinesis by phosphorylating 'Ser-2' residues found in the heptad repeats of the CTD. In Schizosaccharomyces pombe (strain 972 / ATCC 24843) (Fission yeast), this protein is CTD kinase subunit beta (lsc1).